The sequence spans 123 residues: UPF0482 protein YE2026 (123 aa).

The signal sequence occupies residues 1 to 31 (MKITSLPRLMRVFLPVAVLALPLAWQTAALA). Positions 47–66 (GNNDPMSKEQARQSQQQWDD) are disordered.

Belongs to the UPF0482 family.

This chain is UPF0482 protein YE2026, found in Yersinia enterocolitica serotype O:8 / biotype 1B (strain NCTC 13174 / 8081).